A 338-amino-acid polypeptide reads, in one-letter code: Lipoyl synthase (338 aa).

The segment at Met1–Lys24 is disordered. 7 residues coordinate [4Fe-4S] cluster: Cys84, Cys89, Cys95, Cys110, Cys114, Cys117, and Ser324. The Radical SAM core domain occupies Phe96–Lys313.

The protein belongs to the radical SAM superfamily. Lipoyl synthase family. It depends on [4Fe-4S] cluster as a cofactor.

It localises to the cytoplasm. The enzyme catalyses [[Fe-S] cluster scaffold protein carrying a second [4Fe-4S](2+) cluster] + N(6)-octanoyl-L-lysyl-[protein] + 2 oxidized [2Fe-2S]-[ferredoxin] + 2 S-adenosyl-L-methionine + 4 H(+) = [[Fe-S] cluster scaffold protein] + N(6)-[(R)-dihydrolipoyl]-L-lysyl-[protein] + 4 Fe(3+) + 2 hydrogen sulfide + 2 5'-deoxyadenosine + 2 L-methionine + 2 reduced [2Fe-2S]-[ferredoxin]. The protein operates within protein modification; protein lipoylation via endogenous pathway; protein N(6)-(lipoyl)lysine from octanoyl-[acyl-carrier-protein]: step 2/2. In terms of biological role, catalyzes the radical-mediated insertion of two sulfur atoms into the C-6 and C-8 positions of the octanoyl moiety bound to the lipoyl domains of lipoate-dependent enzymes, thereby converting the octanoylated domains into lipoylated derivatives. The protein is Lipoyl synthase of Pseudomonas putida (strain ATCC 700007 / DSM 6899 / JCM 31910 / BCRC 17059 / LMG 24140 / F1).